We begin with the raw amino-acid sequence, 512 residues long: MKKTTLLVILDGWGYSDSDYFNAIKNANTPTWDSIWQEFPKTLINASSLEVGLPRSQMGNSEVGHVNIGCGRVVYQELTKIDKAIEEKTFGDNKAICAAIDNAIKNDSNLHLIGLLSPGGVHSHEEHIFEMIKIAKQKGIKRLYLHAFLDGRDTPPRSAEKSIKKADKLLQDLNLGYIASVCGRYYAMDRDNRWDRVEKAYNAIVNANADFIYDSALEALEQSYARDQSDEFVIPTCIKKDGHLVKVQDNDSVIFMNFRADRAREISHAFTDESFDHFPRKKHLNINFTTLTEYDSKLKCAVAFPPEQPINTLGEVLMKNHKTQLRIAETEKYPHVTFFFNGGREEQFEGEDRILIPSPKVATYDLQPEMSAPEVTDKLVAAINSGKYDCIVCNYANSDMVGHTGNYEAAMQAIEYLDKCIARLKDAILEHDGNMFITADHGNADMMVNPETQKPHTAHTTNLVPFIYVGHKKAQVALEHGKLSDIAPTLLNVMGIAQPKEMTGKTIFNFEK.

Mn(2+) contacts are provided by D11 and S61. The active-site Phosphoserine intermediate is S61. Substrate is bound by residues H122, 152-153 (RD), R184, R190, 259-262 (RADR), and K332. The Mn(2+) site is built by D399, H403, D440, H441, and H459.

The protein belongs to the BPG-independent phosphoglycerate mutase family. In terms of assembly, monomer. The cofactor is Mn(2+).

It catalyses the reaction (2R)-2-phosphoglycerate = (2R)-3-phosphoglycerate. The protein operates within carbohydrate degradation; glycolysis; pyruvate from D-glyceraldehyde 3-phosphate: step 3/5. In terms of biological role, catalyzes the interconversion of 2-phosphoglycerate and 3-phosphoglycerate. This is 2,3-bisphosphoglycerate-independent phosphoglycerate mutase from Francisella tularensis subsp. tularensis (strain FSC 198).